The following is a 119-amino-acid chain: Large ribosomal subunit protein uL22c (119 aa).

This sequence belongs to the universal ribosomal protein uL22 family. As to quaternary structure, part of the 50S ribosomal subunit.

It is found in the plastid. It localises to the chloroplast. This protein binds specifically to 23S rRNA. Its function is as follows. The globular domain of the protein is located near the polypeptide exit tunnel on the outside of the subunit, while an extended beta-hairpin is found that lines the wall of the exit tunnel in the center of the 70S ribosome. This chain is Large ribosomal subunit protein uL22c (rpl22), found in Anthoceros angustus (Hornwort).